The following is a 217-amino-acid chain: Enoyl-CoA-hydratase (217 aa).

It belongs to the enoyl-CoA hydratase/isomerase family.

The enzyme catalyses a (3S)-3-hydroxyacyl-CoA = a (2E)-enoyl-CoA + H2O. The catalysed reaction is a 4-saturated-(3S)-3-hydroxyacyl-CoA = a (3E)-enoyl-CoA + H2O. Its pathway is antibiotic biosynthesis; vancomycin biosynthesis. Involved in the biosynthesis of the nonproteinogenic amino acid monomer (S)-3,5-dihydroxyphenylglycine (Dpg) responsible of the production of vancomycin and teicoplanin antibiotics. Catalyzes the syn-addition of a water molecule across the double bond of a trans-2-enoyl-CoA thioester, resulting in the formation of a beta-hydroxyacyl-CoA thioester. Physiologically, DpgB could act as a dehydratase, facilitating the aromatization of the DPA-S-DgpA or DPA-S-CoA intermediate. The protein is Enoyl-CoA-hydratase (dpgB) of Amycolatopsis orientalis (Nocardia orientalis).